A 346-amino-acid polypeptide reads, in one-letter code: Phosphoribosylformylglycinamidine cyclo-ligase (346 aa).

Belongs to the AIR synthase family.

The protein localises to the cytoplasm. The catalysed reaction is 2-formamido-N(1)-(5-O-phospho-beta-D-ribosyl)acetamidine + ATP = 5-amino-1-(5-phospho-beta-D-ribosyl)imidazole + ADP + phosphate + H(+). It participates in purine metabolism; IMP biosynthesis via de novo pathway; 5-amino-1-(5-phospho-D-ribosyl)imidazole from N(2)-formyl-N(1)-(5-phospho-D-ribosyl)glycinamide: step 2/2. This chain is Phosphoribosylformylglycinamidine cyclo-ligase, found in Shewanella piezotolerans (strain WP3 / JCM 13877).